A 1478-amino-acid polypeptide reads, in one-letter code: FYVE and coiled-coil domain-containing protein 1 (1478 aa).

Ala-2 is modified (N-acetylalanine). Residues 4–33 (TNAESQLQRIIRDLQDAVTELSKEFQEAGE) adopt a coiled-coil conformation. In terms of domain architecture, RUN spans 36–169 (TDDSTSLHKF…VQFDLASRGF (134 aa)). Residue Ser-196 is modified to Phosphoserine. Residues 225 to 280 (NNEALEGFDEMRLELDQLEVREKQLRERMQQLDRENQELRAAVSQQGEQLQTERER) are a coiled coil. The residue at position 342 (Ser-342) is a Phosphoserine. A Phosphothreonine modification is found at Thr-381. Coiled coils occupy residues 394-555 (SDAA…MLER) and 596-1151 (QEAQ…KDAL). Residues 586-613 (GKPEEEQRGLQEAQLDDTKVQEGSQEEE) form a disordered region. Residue Ser-878 is modified to Phosphoserine. Residues 1173–1231 (DTEANHCLDCKREFSWMVRRHHCRICGRIFCYYCCNNYVLSKHGGKKERCCRACFQKLS) form an FYVE-type zinc finger. Residues Cys-1179, Cys-1182, Cys-1195, Cys-1198, Cys-1203, Cys-1206, Cys-1223, and Cys-1226 each coordinate Zn(2+). Residues 1231-1261 (SEGPGSPDSSGSGTSQGEPSPALSPASPGPQ) show a composition bias toward low complexity. Disordered stretches follow at residues 1231-1277 (SEGP…PPDD) and 1294-1332 (SGSS…DMPV). Composition is skewed to polar residues over residues 1294–1305 (SGSSLPETPTET) and 1314–1324 (EQDTTSTSLTP). The GOLD domain maps to 1337 to 1466 (EICLLKSGEL…SKKVFYHLTV (130 aa)).

Can form homodimers. Interacts (via C-terminus) with MAP1LC3B. Interacts with RAB7A; the interaction with RAB7A induces FYCO1 recruitment to late endosomal/lysosomal compartments. Interacts with MAP1LC3B. In terms of tissue distribution, expressed in heart and skeletal muscle.

The protein localises to the cytoplasmic vesicle. It is found in the autophagosome. Its subcellular location is the endosome. It localises to the lysosome. Functionally, may mediate microtubule plus end-directed vesicle transport. The chain is FYVE and coiled-coil domain-containing protein 1 (FYCO1) from Homo sapiens (Human).